A 76-amino-acid chain; its full sequence is MSPFSLLILVICAFSLFFLINLTRGLSILLVFSKNQLLALLLLSIVSLFSISLISALIFFDLLPSTFFGFILLFFF.

An N-terminal signal peptide occupies residues 1 to 25 (MSPFSLLILVICAFSLFFLINLTRG). The Extracellular segment spans residues 26 to 34 (LSILLVFSK). Residues 35-55 (NQLLALLLLSIVSLFSISLIS) traverse the membrane as a helical segment. The Cytoplasmic portion of the chain corresponds to 56–76 (ALIFFDLLPSTFFGFILLFFF).

The protein localises to the membrane. The protein is KANTR integral membrane protein of Homo sapiens (Human).